The primary structure comprises 354 residues: Protein RecA (354 aa).

Residue 67-74 (GPESSGKT) participates in ATP binding.

The protein belongs to the RecA family.

The protein resides in the cytoplasm. In terms of biological role, can catalyze the hydrolysis of ATP in the presence of single-stranded DNA, the ATP-dependent uptake of single-stranded DNA by duplex DNA, and the ATP-dependent hybridization of homologous single-stranded DNAs. It interacts with LexA causing its activation and leading to its autocatalytic cleavage. In Hamiltonella defensa subsp. Acyrthosiphon pisum (strain 5AT), this protein is Protein RecA.